The chain runs to 374 residues: 5-pentadecatrienyl resorcinol O-methyltransferase (374 aa).

S-adenosyl-L-methionine is bound by residues aspartate 239, aspartate 261, methionine 262, and lysine 275. Histidine 279 functions as the Proton acceptor in the catalytic mechanism.

This sequence belongs to the class I-like SAM-binding methyltransferase superfamily. Cation-independent O-methyltransferase family. COMT subfamily. Homodimer. In terms of tissue distribution, expressed predominantly in root hairs.

The enzyme catalyses (8Z,11Z)-5-(pentadeca-8,11,14-trien-1-yl)resorcinol + S-adenosyl-L-methionine = (8Z,11Z)-5-(pentadeca- 8,11,14-trien-1-yl)resorcinol-3-methyl ether + S-adenosyl-L-homocysteine + H(+). In terms of biological role, O-methyltransferase involved in the biosynthetic pathway of the phytotoxin sorgoleone, a potent broad-spectrum inhibitor active against many agronomically important monocot and dicot weed species. Substrate specificity for alkylresorcinols. Strong preference for a five carbons alkyl side chain. The sequence is that of 5-pentadecatrienyl resorcinol O-methyltransferase (OMT3) from Sorghum bicolor (Sorghum).